A 336-amino-acid chain; its full sequence is MEEELKSFVKVWGSAIISVSYCYYIPSKIKSGVHRLLSVLPVCVLFLVLPLFFVFTIFSSTTAFCLSILANFKLILFAFDKGPLLPLPANLFRFICFTCLPIKIQKNPNSQNHLPKWVFFCKAAIFGVLLNVHNYKSSLPPILLICLYPLHLYLVLDVLLTIVNALLTIILGCDLEPHFNEPYLATSLQDFWGRRWNLMVPAIFRPGVYHPMRSVCQPQMRSDWARFMGCWTTFFVSGLIHELVYFYINRETPTWEVTWFFVLQGVCTAMEKAVKRKTRWSLSPMLSRLITVGFLVVTGYFLFFRQIERSNMLERRATEASLIIDFVKHKLSNFLL.

8 consecutive transmembrane segments (helical) span residues 7–27, 38–58, 59–79, 82–102, 117–135, 152–172, 228–248, and 284–304; these read SFVK…YIPS, SVLP…FTIF, SSTT…LFAF, GPLL…CLPI, WVFF…VHNY, LYLV…IILG, MGCW…YFYI, and PMLS…FLFF.

This sequence belongs to the wax synthase family.

It localises to the membrane. It carries out the reaction a long chain fatty alcohol + a fatty acyl-CoA = a wax ester + CoA. In terms of biological role, catalyzes the final step in the synthesis of long-chain linear esters (waxes). This Arabidopsis thaliana (Mouse-ear cress) protein is Probable long-chain-alcohol O-fatty-acyltransferase 8.